A 275-amino-acid chain; its full sequence is Large ribosomal subunit protein uL2 (275 aa).

Residues 222–275 are disordered; sequence GVAMNPVDHPMGGGEGRSSGGRHPCSPWGMPTKGYKTRKNKTTDKFIVRKRNKR.

This sequence belongs to the universal ribosomal protein uL2 family. In terms of assembly, part of the 50S ribosomal subunit. Forms a bridge to the 30S subunit in the 70S ribosome.

Its function is as follows. One of the primary rRNA binding proteins. Required for association of the 30S and 50S subunits to form the 70S ribosome, for tRNA binding and peptide bond formation. It has been suggested to have peptidyltransferase activity; this is somewhat controversial. Makes several contacts with the 16S rRNA in the 70S ribosome. In Desulfatibacillum aliphaticivorans, this protein is Large ribosomal subunit protein uL2.